The chain runs to 187 residues: MASTSDIRNGLCIKFNHDIYKIIEFLHVKPGKGPAFVRTKLRSLSNGKVLDNTFSAGHKIDEVRVETHTYQYLYAEGDQFHFMNIESFEQITLDKKILDNPGLLKEGTNVMVQVNTETDLPLSVDMPASIILEVTYAEPGVKGNTATNATKSATVETGASINVPLFINEGDKIKIDTASGSYMERVK.

It belongs to the elongation factor P family.

Its subcellular location is the cytoplasm. Its pathway is protein biosynthesis; polypeptide chain elongation. Involved in peptide bond synthesis. Stimulates efficient translation and peptide-bond synthesis on native or reconstituted 70S ribosomes in vitro. Probably functions indirectly by altering the affinity of the ribosome for aminoacyl-tRNA, thus increasing their reactivity as acceptors for peptidyl transferase. The protein is Elongation factor P of Flavobacterium psychrophilum (strain ATCC 49511 / DSM 21280 / CIP 103535 / JIP02/86).